The primary structure comprises 418 residues: Glutamyl-tRNA reductase (418 aa).

Substrate-binding positions include 49 to 52 (TCNR), S107, 112 to 114 (EPQ), and Q118. The active-site Nucleophile is the C50. 187–192 (GAGETI) contacts NADP(+).

This sequence belongs to the glutamyl-tRNA reductase family. As to quaternary structure, homodimer.

It carries out the reaction (S)-4-amino-5-oxopentanoate + tRNA(Glu) + NADP(+) = L-glutamyl-tRNA(Glu) + NADPH + H(+). The protein operates within porphyrin-containing compound metabolism; protoporphyrin-IX biosynthesis; 5-aminolevulinate from L-glutamyl-tRNA(Glu): step 1/2. Its function is as follows. Catalyzes the NADPH-dependent reduction of glutamyl-tRNA(Glu) to glutamate 1-semialdehyde (GSA). The protein is Glutamyl-tRNA reductase of Aeromonas salmonicida (strain A449).